The sequence spans 310 residues: Calcium homeostasis modulator protein 5 (310 aa).

A run of 4 helical transmembrane segments spans residues 17 to 37 (TIGY…FSMV), 49 to 69 (FPYG…VGFF), 101 to 121 (LIKV…VALL), and 181 to 201 (QILG…GTCY).

This sequence belongs to the CALHM family.

It localises to the membrane. Pore-forming subunit of a voltage-gated ion channel. The protein is Calcium homeostasis modulator protein 5 (calhm5.1) of Danio rerio (Zebrafish).